Here is a 64-residue protein sequence, read N- to C-terminus: Large ribosomal subunit protein bL33 (64 aa).

The protein belongs to the bacterial ribosomal protein bL33 family.

This Crocosphaera subtropica (strain ATCC 51142 / BH68) (Cyanothece sp. (strain ATCC 51142)) protein is Large ribosomal subunit protein bL33.